We begin with the raw amino-acid sequence, 1105 residues long: Serine/threonine-protein kinase Warts (1105 aa).

Over residues 33-54 (VQNNHRNNQNYTPLRYTATNGR) the composition is skewed to polar residues. Disordered regions lie at residues 33 to 81 (VQNN…APDV), 145 to 253 (CSPA…TQNG), 273 to 362 (GGGS…YQAR), 383 to 462 (QTAV…EPPS), and 514 to 643 (AQRE…RKEF). The span at 69–81 (MEPPPSASPAPDV) shows a compositional bias: pro residues. The segment covering 242 to 253 (QRGNSPVITQNG) has biased composition (polar residues). Residues 307–320 (SMQSRQSPTQSQQS) are compositionally biased toward low complexity. Polar residues predominate over residues 325–343 (SPSSGIYSATSAGSPSPIT). Low complexity-rich tracts occupy residues 387–400 (APQS…SNSP) and 415–437 (AAVV…QHQQ). Basic and acidic residues predominate over residues 515–533 (QRERDQRERDQRERERDQQ). 2 stretches are compositionally biased toward low complexity: residues 551-576 (QSNN…SNSN) and 589-616 (NNNS…SSTS). Basic and acidic residues predominate over residues 627–643 (PERKKISKEKEEERKEF). The Protein kinase domain maps to 719–1020 (FVKLKPIGVG…VDEVKSHDFF (302 aa)). ATP-binding positions include 725–733 (IGVGAFGEV) and Lys749. The Proton acceptor role is filled by Asp843. Disordered stretches follow at residues 881–900 (GNHS…ENGP) and 1038–1070 (EIKH…DDVD). The region spanning 1021-1091 (KGIDFADMRK…FTFRRFFDDK (71 aa)) is the AGC-kinase C-terminal domain.

Belongs to the protein kinase superfamily. AGC Ser/Thr protein kinase family. In terms of assembly, interacts with yki. Interacts with jub. Mg(2+) is required as a cofactor.

Its subcellular location is the cytoplasm. It localises to the cytosol. The protein localises to the cytoskeleton. The protein resides in the microtubule organizing center. It is found in the centrosome. It carries out the reaction L-seryl-[protein] + ATP = O-phospho-L-seryl-[protein] + ADP + H(+). The catalysed reaction is L-threonyl-[protein] + ATP = O-phospho-L-threonyl-[protein] + ADP + H(+). Its function is as follows. Negative regulator of Yorkie (Yki) in the Hippo/SWH (Sav/Wts/Hpo) signaling pathway that plays a pivotal role in organ size control and tumor suppression by restricting proliferation and promoting apoptosis. The core of this pathway is composed of a kinase cascade wherein Hippo (Hpo), in complex with its regulatory protein Salvador (Sav), phosphorylates and activates Warts (Wts) in complex with its regulatory protein Mats, which in turn phosphorylates and inactivates the Yorkie (Yki) oncoprotein. The Hippo/SWH signaling pathway inhibits the activity of the transcriptional complex formed by Scalloped (sd) and Yki and the target genes of this pathway include cyclin-E (cycE), diap1 and bantam. Inhibits nuclear localization of Yki. Regulates salivary gland degradation in a PI3K-dependent manner and Yki- and Sd-independent, mechanism. The chain is Serine/threonine-protein kinase Warts (wts) from Drosophila melanogaster (Fruit fly).